Consider the following 283-residue polypeptide: NFU1 iron-sulfur cluster scaffold homolog, mitochondrial (283 aa).

A mitochondrion-targeting transit peptide spans 1–30; it reads MSKFLSQAALNTLRNTRLGSRQLVRSFAGI. A nifU region spans residues 182–250; sequence IKELLDTRIR…IPEVESVEQV (69 aa). Positions 219 and 222 each coordinate [4Fe-4S] cluster.

Belongs to the NifU family.

It is found in the mitochondrion. Functionally, molecular scaffold for [Fe-S] cluster assembly of mitochondrial iron-sulfur proteins. This chain is NFU1 iron-sulfur cluster scaffold homolog, mitochondrial, found in Drosophila erecta (Fruit fly).